Consider the following 366-residue polypeptide: Cell division protein FtsZ 1 (366 aa).

GTP is bound by residues 45-49 (GAGCN), 132-134 (GTG), E163, R167, and D210. Residues 344–354 (PEEETPLETPE) are compositionally biased toward acidic residues. The disordered stretch occupies residues 344–366 (PEEETPLETPEESPSIEISIPEL). Positions 355-366 (ESPSIEISIPEL) are enriched in low complexity.

It belongs to the FtsZ family. As to quaternary structure, homodimer. Polymerizes to form a dynamic ring structure in a strictly GTP-dependent manner. Interacts directly with several other division proteins.

The protein localises to the cytoplasm. In terms of biological role, essential cell division protein that forms a contractile ring structure (Z ring) at the future cell division site. The regulation of the ring assembly controls the timing and the location of cell division. One of the functions of the FtsZ ring is to recruit other cell division proteins to the septum to produce a new cell wall between the dividing cells. Binds GTP and shows GTPase activity. The protein is Cell division protein FtsZ 1 of Pyrococcus woesei.